The sequence spans 244 residues: tRNA pseudouridine synthase B (244 aa).

The active-site Nucleophile is the Asp-46.

It belongs to the pseudouridine synthase TruB family. Type 1 subfamily.

It carries out the reaction uridine(55) in tRNA = pseudouridine(55) in tRNA. Functionally, responsible for synthesis of pseudouridine from uracil-55 in the psi GC loop of transfer RNAs. The protein is tRNA pseudouridine synthase B of Bordetella parapertussis (strain 12822 / ATCC BAA-587 / NCTC 13253).